Consider the following 347-residue polypeptide: DNA-directed RNA polymerase subunit alpha (347 aa).

The tract at residues 1–226 is alpha N-terminal domain (alpha-NTD); it reads MLISQRPTLS…ELFGLARELN (226 aa). Positions 241–347 are alpha C-terminal domain (alpha-CTD); the sequence is ADHIASFALP…DQDYAETEQL (107 aa).

It belongs to the RNA polymerase alpha chain family. In terms of assembly, homodimer. The RNAP catalytic core consists of 2 alpha, 1 beta, 1 beta' and 1 omega subunit. When a sigma factor is associated with the core the holoenzyme is formed, which can initiate transcription.

It catalyses the reaction RNA(n) + a ribonucleoside 5'-triphosphate = RNA(n+1) + diphosphate. DNA-dependent RNA polymerase catalyzes the transcription of DNA into RNA using the four ribonucleoside triphosphates as substrates. This chain is DNA-directed RNA polymerase subunit alpha, found in Mycobacterium ulcerans (strain Agy99).